A 268-amino-acid polypeptide reads, in one-letter code: MAAAAFAVPRGVQLRVLTERLLRGGVRELLRPRLSGSTPGSERDFSLSHSRGTVIVERWWKVPLAGEGRKPRLHRRHRVYKLVEDTKHRPKENLELILTQSVDELGVRGDLVSVKKSVGRNRLLPEGLAVYASPENKKLFEEEKLLRQEGKLDKIQTKAGEATVKFLRSCHLEVGMKNNVKWELNPEIVARHFLRNLGVVVAPHALKLPEEPITQRGEYWCEVTVNGLDTVRVPMSVVNFERPKTKRYKYWLAQQAAKGMASTSFQKI.

Residues 1–52 constitute a mitochondrion transit peptide; it reads MAAAAFAVPRGVQLRVLTERLLRGGVRELLRPRLSGSTPGSERDFSLSHSRG.

Belongs to the bacterial ribosomal protein bL9 family. In terms of assembly, component of the mitochondrial ribosome large subunit (39S) which comprises a 16S rRNA and about 50 distinct proteins.

It is found in the mitochondrion. In Bos taurus (Bovine), this protein is Large ribosomal subunit protein bL9m (MRPL9).